The sequence spans 321 residues: Ribosomal RNA small subunit methyltransferase H (321 aa).

Residues 29 to 31 (GGH), Asp48, Tyr76, Asp97, and Gln104 each bind S-adenosyl-L-methionine. The tract at residues 277–321 (LTRGAEPASETEKAENPRAASVRLRAVERTAPNPDHTRKPTGGAS) is disordered.

The protein belongs to the methyltransferase superfamily. RsmH family.

It localises to the cytoplasm. The enzyme catalyses cytidine(1402) in 16S rRNA + S-adenosyl-L-methionine = N(4)-methylcytidine(1402) in 16S rRNA + S-adenosyl-L-homocysteine + H(+). In terms of biological role, specifically methylates the N4 position of cytidine in position 1402 (C1402) of 16S rRNA. In Frankia casuarinae (strain DSM 45818 / CECT 9043 / HFP020203 / CcI3), this protein is Ribosomal RNA small subunit methyltransferase H.